A 331-amino-acid polypeptide reads, in one-letter code: Glutaminase (331 aa).

Substrate-binding residues include Ser77, Asn129, Glu173, Asn180, Tyr204, Tyr256, and Val274.

It belongs to the glutaminase family. Homotetramer.

The catalysed reaction is L-glutamine + H2O = L-glutamate + NH4(+). The chain is Glutaminase from Oceanobacillus iheyensis (strain DSM 14371 / CIP 107618 / JCM 11309 / KCTC 3954 / HTE831).